The chain runs to 427 residues: Gamma-glutamyl phosphate reductase (427 aa).

Belongs to the gamma-glutamyl phosphate reductase family.

The protein localises to the cytoplasm. It catalyses the reaction L-glutamate 5-semialdehyde + phosphate + NADP(+) = L-glutamyl 5-phosphate + NADPH + H(+). It functions in the pathway amino-acid biosynthesis; L-proline biosynthesis; L-glutamate 5-semialdehyde from L-glutamate: step 2/2. Catalyzes the NADPH-dependent reduction of L-glutamate 5-phosphate into L-glutamate 5-semialdehyde and phosphate. The product spontaneously undergoes cyclization to form 1-pyrroline-5-carboxylate. This is Gamma-glutamyl phosphate reductase from Brucella anthropi (strain ATCC 49188 / DSM 6882 / CCUG 24695 / JCM 21032 / LMG 3331 / NBRC 15819 / NCTC 12168 / Alc 37) (Ochrobactrum anthropi).